The sequence spans 632 residues: Chaperone protein HtpG (632 aa).

Residues 1-343 are a; substrate-binding; that stretch reads MSEQTINNKE…SNDLALNVSR (343 aa). The tract at residues 344-560 is b; that stretch reads EILQDNKVTQ…DFEMGTQMAK (217 aa). Residues 561–632 are c; that stretch reads LLEAAGQAAP…LSAMNQLLSK (72 aa).

Belongs to the heat shock protein 90 family. Homodimer.

The protein localises to the cytoplasm. Molecular chaperone. Has ATPase activity. The chain is Chaperone protein HtpG from Aliivibrio salmonicida (strain LFI1238) (Vibrio salmonicida (strain LFI1238)).